Consider the following 487-residue polypeptide: GTPase Der (487 aa).

The disordered stretch occupies residues Met-1 to Arg-20. EngA-type G domains lie at Pro-28–Pro-197 and Phe-225–Arg-401. Residues Gly-34–Ser-41, Asp-83–Leu-87, Asn-149–Asp-152, Gly-231–Ser-238, Asp-278–Ile-282, and Asn-343–Asp-346 contribute to the GTP site. Positions Arg-402 to Arg-486 constitute a KH-like domain.

Belongs to the TRAFAC class TrmE-Era-EngA-EngB-Septin-like GTPase superfamily. EngA (Der) GTPase family. In terms of assembly, associates with the 50S ribosomal subunit.

Its function is as follows. GTPase that plays an essential role in the late steps of ribosome biogenesis. The sequence is that of GTPase Der from Leptospira borgpetersenii serovar Hardjo-bovis (strain L550).